The chain runs to 525 residues: GMP synthase [glutamine-hydrolyzing] (525 aa).

Residues 8–207 enclose the Glutamine amidotransferase type-1 domain; the sequence is KILILDFGSQ…ALEICACAAN (200 aa). Catalysis depends on Cys85, which acts as the Nucleophile. Catalysis depends on residues His181 and Glu183. In terms of domain architecture, GMPS ATP-PPase spans 208–400; that stretch reads WKPASIIEDA…LGLPYNMLYR (193 aa). 235–241 is a binding site for ATP; sequence SGGVDSS.

As to quaternary structure, homodimer.

It catalyses the reaction XMP + L-glutamine + ATP + H2O = GMP + L-glutamate + AMP + diphosphate + 2 H(+). It participates in purine metabolism; GMP biosynthesis; GMP from XMP (L-Gln route): step 1/1. In terms of biological role, catalyzes the synthesis of GMP from XMP. This chain is GMP synthase [glutamine-hydrolyzing], found in Shewanella halifaxensis (strain HAW-EB4).